The following is a 430-amino-acid chain: Peptidoglycan DD-endopeptidase ShyA (430 aa).

A signal peptide spans 1 to 35 (MISKSIILRFSELSMRKKATLVGLPLLAVAAISSS). Zn(2+) is bound by residues His297, Asp301, and His378.

This sequence belongs to the peptidase M23B family. It depends on Zn(2+) as a cofactor.

Its subcellular location is the periplasm. It functions in the pathway cell wall degradation; peptidoglycan degradation. Its activity is regulated as follows. Reduced activity in 0.5 mM EDTA and a complete loss of activity at higher EDTA concentrations. The effect of EDTA can be reversed by addition of 1 mM ZnCl(2). Conformational switching between open (catalytically active) and closed (catalytically inactive) conformation of this protein is suggested mechanism of its regulation. The signal or inducer of the conformational shift to the open form unmasking the active site is currently not understood. In terms of biological role, cell wall peptidoglycan (PG) DD-endopeptidase essential for cell growth and elongation. Hydrolyzes peptide cross-links which covalently connect adjacent PG strands probably to allow insertion of new glycans and thus cell wall expansion. Degrades purified whole PG sacculi in vitro. Releases predominantly short glycan chains from the PG. Cleaves D,D cross-linked muropeptides specifically preferring dimeric tetrapeptide-tetrapeptide (D44) substrates and has only little activity on dimeric tetrapeptide-pentapeptide (D45) substrates. Also converts more than 50% of tetrapeptide-tripeptide (D43) to product as well as more than 50% of D43M, which contains D-Met instead of D-Ala in the fourth position of the acceptor moiety. Cleaves the D,D bond between diaminopimelic acid (DAP) and D-Ala of the PG substrate in vitro. No cleavage of L,D bond connecting two DAP moieties. In Vibrio cholerae serotype O1 (strain ATCC 39315 / El Tor Inaba N16961), this protein is Peptidoglycan DD-endopeptidase ShyA.